The chain runs to 63 residues: Phylloseptin-Az1 (63 aa).

The first 19 residues, L1–C19, serve as a signal peptide directing secretion. Positions E20 to E41 are excised as a propeptide. F62 is modified (phenylalanine amide).

As to expression, expressed by the skin glands.

It is found in the secreted. Its function is as follows. Has antimicrobial activity. The protein is Phylloseptin-Az1 of Pithecopus azureus (Orange-legged monkey tree frog).